Consider the following 673-residue polypeptide: Xyloglucan glycosyltransferase 4 (673 aa).

The next 2 membrane-spanning stretches (helical) occupy residues 90-110 (FIKA…VAHF) and 144-164 (IAPL…IQSL). Asp238 is a catalytic residue. 2 residues coordinate substrate: Asp297 and Asp299. Asp391 is an active-site residue. Transmembrane regions (helical) follow at residues 469–489 (LILP…TMFI) and 494–514 (LPLW…ILPS). The residue at position 581 (Ser581) is a Phosphoserine. 2 helical membrane-spanning segments follow: residues 623-643 (VFKK…RSFL) and 648-668 (LHFY…LDLI).

The protein belongs to the glycosyltransferase 2 family. Plant cellulose synthase-like C subfamily. As to quaternary structure, homodimer. Interacts with XXT5. Interacts with FUT1, MUR3 and XLT2. Expressed in seedlings, roots, leaves, stems, flowers and seeds.

The protein localises to the golgi apparatus membrane. Beta-1,4-glucan synthase rather involved in the synthesis of the xyloglucan backbone than cellulose. Seems to work simultaneously with xyloglucan 6-xylosyltransferase. Xyloglucan is a noncellulosic polysaccharides of plant cell wall and consists of a glucan backbone substituted by xylose, galactose and fucose. Associates with other xyloglucan-synthesizing enzymes to form multiprotein complexes for xyloglucan synthesis in the Golgi. The sequence is that of Xyloglucan glycosyltransferase 4 from Arabidopsis thaliana (Mouse-ear cress).